The sequence spans 240 residues: 2,3,4,5-tetrahydropyridine-2,6-dicarboxylate N-acetyltransferase (240 aa).

It belongs to the transferase hexapeptide repeat family. DapH subfamily.

It catalyses the reaction (S)-2,3,4,5-tetrahydrodipicolinate + acetyl-CoA + H2O = L-2-acetamido-6-oxoheptanedioate + CoA. Its pathway is amino-acid biosynthesis; L-lysine biosynthesis via DAP pathway; LL-2,6-diaminopimelate from (S)-tetrahydrodipicolinate (acetylase route): step 1/3. Functionally, catalyzes the transfer of an acetyl group from acetyl-CoA to tetrahydrodipicolinate. This chain is 2,3,4,5-tetrahydropyridine-2,6-dicarboxylate N-acetyltransferase, found in Halalkalibacterium halodurans (strain ATCC BAA-125 / DSM 18197 / FERM 7344 / JCM 9153 / C-125) (Bacillus halodurans).